Reading from the N-terminus, the 374-residue chain is Wnt inhibitory factor 1 (374 aa).

Positions 1-28 (MSLTGYFAAPLCSIFLFILAHADAGQQE) are cleaved as a signal peptide. Residues 33–172 (MWIDAHQARV…PQNAIFFKTC (140 aa)) form the WIF domain. Asn83 carries an N-linked (GlcNAc...) asparagine glycan. 7 disulfides stabilise this stretch: Cys135-Cys172, Cys177-Cys187, Cys181-Cys193, Cys195-Cys204, Cys209-Cys219, Cys213-Cys225, and Cys227-Cys236. EGF-like domains are found at residues 173-205 (QQAK…PHCE), 208-237 (LCMP…INCD), 237-269 (DKVN…EQCE), 270-301 (TSKC…DLCS), and 302-333 (KPVC…RYCN). Asn240 carries N-linked (GlcNAc...) asparagine glycosylation. 9 cysteine pairs are disulfide-bonded: Cys241–Cys251, Cys245–Cys257, Cys259–Cys268, Cys273–Cys283, Cys277–Cys289, Cys291–Cys300, Cys305–Cys315, Cys309–Cys321, and Cys323–Cys332. Positions 343-374 (ALRPTGSRNRQHTPSPKRTEDRQALPESNYIW) are disordered. Residues 348–358 (GSRNRQHTPSP) show a composition bias toward polar residues.

In terms of tissue distribution, during somatogenesis, expressed predominantly in unsegmented paraxial presomitic mesoderm and, to a much lesser extent, in newly segmented somites.

Its subcellular location is the secreted. Binds to WNT proteins and inhibits their activities. May be involved in mesoderm segmentation. This chain is Wnt inhibitory factor 1 (wif1), found in Xenopus laevis (African clawed frog).